The sequence spans 229 residues: UPF0488 protein C8orf33 (229 aa).

The span at 1-16 (MAALGHLAGEAAAAPG) shows a compositional bias: low complexity. A disordered region spans residues 1–96 (MAALGHLAGE…GEKASEKLAP (96 aa)). An N-acetylalanine modification is found at alanine 2. Arginine 27 carries the omega-N-methylarginine modification. A compositionally biased stretch (basic residues) spans 69–79 (KKQKNKKKTRN). Serine 82 carries the post-translational modification Phosphoserine.

This sequence belongs to the UPF0488 family.

The polypeptide is UPF0488 protein C8orf33 (C8orf33) (Homo sapiens (Human)).